The following is a 212-amino-acid chain: 3-demethoxyubiquinol 3-hydroxylase (212 aa).

Glutamate 61, glutamate 91, histidine 94, glutamate 143, glutamate 175, and histidine 178 together coordinate Fe cation.

Belongs to the COQ7 family. Fe cation is required as a cofactor.

The protein resides in the cell membrane. It carries out the reaction a 5-methoxy-2-methyl-3-(all-trans-polyprenyl)benzene-1,4-diol + AH2 + O2 = a 3-demethylubiquinol + A + H2O. It participates in cofactor biosynthesis; ubiquinone biosynthesis. In terms of biological role, catalyzes the hydroxylation of 2-nonaprenyl-3-methyl-6-methoxy-1,4-benzoquinol during ubiquinone biosynthesis. The chain is 3-demethoxyubiquinol 3-hydroxylase from Paraburkholderia phytofirmans (strain DSM 17436 / LMG 22146 / PsJN) (Burkholderia phytofirmans).